A 194-amino-acid chain; its full sequence is Aminodeoxychorismate/anthranilate synthase component 2 (194 aa).

One can recognise a Glutamine amidotransferase type-1 domain in the interval 1–194; that stretch reads MILMIDNYDS…IETYRKEVIA (194 aa). Catalysis depends on residues Cys-79, His-168, and Glu-170.

In terms of assembly, monomer. Heterodimer consisting of two non-identical subunits: a glutamine amidotransferase subunit (PabA) and a aminodeoxychorismate synthase subunit (PabB).

It carries out the reaction chorismate + L-glutamine = anthranilate + pyruvate + L-glutamate + H(+). It catalyses the reaction chorismate + L-glutamine = 4-amino-4-deoxychorismate + L-glutamate. The protein operates within amino-acid biosynthesis; L-tryptophan biosynthesis; L-tryptophan from chorismate: step 1/5. Its pathway is cofactor biosynthesis; tetrahydrofolate biosynthesis; 4-aminobenzoate from chorismate: step 1/2. Part of a heterodimeric complex that catalyzes the two-step biosynthesis of 4-amino-4-deoxychorismate (ADC), a precursor of p-aminobenzoate (PABA) and tetrahydrofolate. In the first step, a glutamine amidotransferase (PabA) generates ammonia as a substrate that, along with chorismate, is used in the second step, catalyzed by aminodeoxychorismate synthase (PabB) to produce ADC. PabA converts glutamine into glutamate only in the presence of stoichiometric amounts of PabB. Also involved in the biosynthesis of anthranilate. Complements a glutamine amidotransferase-negative mutant. The sequence is that of Aminodeoxychorismate/anthranilate synthase component 2 from Bacillus subtilis (strain 168).